The sequence spans 440 residues: Glutamyl-tRNA reductase (440 aa).

Substrate is bound by residues 55–58, serine 115, 120–122, and glutamine 126; these read TCNR and ETQ. Cysteine 56 acts as the Nucleophile in catalysis. 199–204 lines the NADP(+) pocket; the sequence is GSGEMG.

Belongs to the glutamyl-tRNA reductase family. As to quaternary structure, homodimer.

It catalyses the reaction (S)-4-amino-5-oxopentanoate + tRNA(Glu) + NADP(+) = L-glutamyl-tRNA(Glu) + NADPH + H(+). It participates in porphyrin-containing compound metabolism; protoporphyrin-IX biosynthesis; 5-aminolevulinate from L-glutamyl-tRNA(Glu): step 1/2. Functionally, catalyzes the NADPH-dependent reduction of glutamyl-tRNA(Glu) to glutamate 1-semialdehyde (GSA). The sequence is that of Glutamyl-tRNA reductase from Helicobacter hepaticus (strain ATCC 51449 / 3B1).